Here is a 562-residue protein sequence, read N- to C-terminus: T-complex protein 1 subunit epsilon (562 aa).

Belongs to the TCP-1 chaperonin family. As to quaternary structure, heterooligomeric complex of about 850 to 900 kDa that forms two stacked rings, 12 to 16 nm in diameter.

Its subcellular location is the cytoplasm. Functionally, molecular chaperone; assists the folding of proteins upon ATP hydrolysis. Known to play a role, in vitro, in the folding of actin and tubulin. In yeast may play a role in mitotic spindle formation. This is T-complex protein 1 subunit epsilon (CCT5) from Saccharomyces cerevisiae (strain ATCC 204508 / S288c) (Baker's yeast).